Consider the following 224-residue polypeptide: Urease accessory protein UreG (224 aa).

The segment covering methionine 1–arginine 20 has biased composition (basic residues). A disordered region spans residues methionine 1 to proline 25. Glycine 32–threonine 39 is a binding site for GTP.

Belongs to the SIMIBI class G3E GTPase family. UreG subfamily. As to quaternary structure, homodimer. UreD, UreF and UreG form a complex that acts as a GTP-hydrolysis-dependent molecular chaperone, activating the urease apoprotein by helping to assemble the nickel containing metallocenter of UreC. The UreE protein probably delivers the nickel.

It is found in the cytoplasm. Facilitates the functional incorporation of the urease nickel metallocenter. This process requires GTP hydrolysis, probably effectuated by UreG. In Mycobacterium bovis (strain ATCC BAA-935 / AF2122/97), this protein is Urease accessory protein UreG.